The following is a 309-amino-acid chain: Interferon-inducible double-stranded RNA-dependent protein kinase activator A homolog A (309 aa).

A disordered region spans residues 1 to 22 (MSQERFPAAPKMSSEKPTSLDA). DRBM domains are found at residues 31–98 (TPIQ…ILRG), 123–191 (NPVG…KFKT), and 236–304 (DYVK…YLKI).

It belongs to the PRKRA family. In terms of assembly, homodimer. Interacts with dicer1 and eif2ak2/pkr. Also able to interact with dsRNA.

It localises to the cytoplasm. It is found in the perinuclear region. The protein resides in the nucleus. Activates eif2ak2/pkr in the absence of double-stranded RNA (dsRNA), leading to phosphorylation of eif2s1/efi2-alpha and inhibition of translation and induction of apoptosis. Required for siRNA production by dicer1 and for subsequent siRNA-mediated post-transcriptional gene silencing. Does not seem to be required for processing of pre-miRNA to miRNA by dicer1. This chain is Interferon-inducible double-stranded RNA-dependent protein kinase activator A homolog A (prkra-a), found in Xenopus laevis (African clawed frog).